Here is a 346-residue protein sequence, read N- to C-terminus: Protein RecA (346 aa).

65-72 (GPESSGKT) serves as a coordination point for ATP.

The protein belongs to the RecA family.

Its subcellular location is the cytoplasm. Functionally, can catalyze the hydrolysis of ATP in the presence of single-stranded DNA, the ATP-dependent uptake of single-stranded DNA by duplex DNA, and the ATP-dependent hybridization of homologous single-stranded DNAs. It interacts with LexA causing its activation and leading to its autocatalytic cleavage. The sequence is that of Protein RecA from Enterococcus mundtii.